The chain runs to 259 residues: Probable ABC transporter permease protein RP096 (259 aa).

5 consecutive transmembrane segments (helical) span residues 13–35, 49–69, 148–168, 195–215, and 237–257; these read TIKF…SSII, LFIG…SGAV, VIAA…IGVM, PIDV…ISII, and AVVN…ELFF.

This sequence belongs to the MlaE permease family.

The protein resides in the cell inner membrane. Could be part of an ABC transporter complex. In Rickettsia prowazekii (strain Madrid E), this protein is Probable ABC transporter permease protein RP096.